The primary structure comprises 145 residues: METSDELKQRIGELSYEVTQHAATESPFTGEYDDFFEKGIYVDIVSGEVLFSSLDKFNSGCGWPAFSKPIENRMVTNHDDSSYGMRRVEVKSREAGSHLGHVFSDGPKEAGGLRYCINSAALKFIPYDQMEKEGYAQWLTLFDET.

Residues 4–127 (SDELKQRIGE…NSAALKFIPY (124 aa)) form the MsrB domain. The active-site Nucleophile is the cysteine 116.

It belongs to the MsrB Met sulfoxide reductase family.

It catalyses the reaction L-methionyl-[protein] + [thioredoxin]-disulfide + H2O = L-methionyl-(R)-S-oxide-[protein] + [thioredoxin]-dithiol. The polypeptide is Peptide methionine sulfoxide reductase MsrB (Streptococcus pyogenes serotype M3 (strain ATCC BAA-595 / MGAS315)).